The sequence spans 385 residues: 4-hydroxy-3-methylbut-2-en-1-yl diphosphate synthase (flavodoxin) 1 (385 aa).

[4Fe-4S] cluster contacts are provided by C280, C283, C315, and E322.

It belongs to the IspG family. It depends on [4Fe-4S] cluster as a cofactor.

It carries out the reaction (2E)-4-hydroxy-3-methylbut-2-enyl diphosphate + oxidized [flavodoxin] + H2O + 2 H(+) = 2-C-methyl-D-erythritol 2,4-cyclic diphosphate + reduced [flavodoxin]. It participates in isoprenoid biosynthesis; isopentenyl diphosphate biosynthesis via DXP pathway; isopentenyl diphosphate from 1-deoxy-D-xylulose 5-phosphate: step 5/6. In terms of biological role, converts 2C-methyl-D-erythritol 2,4-cyclodiphosphate (ME-2,4cPP) into 1-hydroxy-2-methyl-2-(E)-butenyl 4-diphosphate. The sequence is that of 4-hydroxy-3-methylbut-2-en-1-yl diphosphate synthase (flavodoxin) 1 from Streptomyces avermitilis (strain ATCC 31267 / DSM 46492 / JCM 5070 / NBRC 14893 / NCIMB 12804 / NRRL 8165 / MA-4680).